The primary structure comprises 525 residues: GMP synthase [glutamine-hydrolyzing] (525 aa).

In terms of domain architecture, Glutamine amidotransferase type-1 spans 8–207 (KILILDFGSQ…AVAICGCGTN (200 aa)). Residue Cys85 is the Nucleophile of the active site. Active-site residues include His181 and Glu183. In terms of domain architecture, GMPS ATP-PPase spans 208 to 400 (WKPSSIIEDA…LGLPYNMLYR (193 aa)). Position 235-241 (235-241 (SGGVDSS)) interacts with ATP.

Homodimer.

The catalysed reaction is XMP + L-glutamine + ATP + H2O = GMP + L-glutamate + AMP + diphosphate + 2 H(+). Its pathway is purine metabolism; GMP biosynthesis; GMP from XMP (L-Gln route): step 1/1. Catalyzes the synthesis of GMP from XMP. The polypeptide is GMP synthase [glutamine-hydrolyzing] (Shewanella denitrificans (strain OS217 / ATCC BAA-1090 / DSM 15013)).